The following is a 349-amino-acid chain: Phosphoribosylformylglycinamidine cyclo-ligase (349 aa).

This sequence belongs to the AIR synthase family.

The protein localises to the cytoplasm. It catalyses the reaction 2-formamido-N(1)-(5-O-phospho-beta-D-ribosyl)acetamidine + ATP = 5-amino-1-(5-phospho-beta-D-ribosyl)imidazole + ADP + phosphate + H(+). It participates in purine metabolism; IMP biosynthesis via de novo pathway; 5-amino-1-(5-phospho-D-ribosyl)imidazole from N(2)-formyl-N(1)-(5-phospho-D-ribosyl)glycinamide: step 2/2. The protein is Phosphoribosylformylglycinamidine cyclo-ligase of Methanococcus maripaludis (strain C6 / ATCC BAA-1332).